Reading from the N-terminus, the 130-residue chain is Large ribosomal subunit protein bL20c (130 aa).

Belongs to the bacterial ribosomal protein bL20 family.

It is found in the plastid. The protein resides in the chloroplast. Functionally, binds directly to 23S ribosomal RNA and is necessary for the in vitro assembly process of the 50S ribosomal subunit. It is not involved in the protein synthesizing functions of that subunit. The sequence is that of Large ribosomal subunit protein bL20c from Fagopyrum esculentum subsp. ancestrale (Wild buckwheat).